The chain runs to 596 residues: Aspartic proteinase MKC7 (596 aa).

The signal sequence occupies residues 1 to 22 (MKLSVLTFVVDALLVCSSIVDA). Residues 23–65 (GVTDFPSLPSNEVYVKMNFQKKYGSSFENALDDTKGRTRLMTR) constitute a propeptide that is removed on maturation. Positions 81–468 (YSVELDIGTP…DLDNMEISMA (388 aa)) constitute a Peptidase A1 domain. The active site involves D99. 7 N-linked (GlcNAc...) asparagine glycosylation sites follow: N180, N190, N219, N229, N232, N286, and N346. Residue D360 is part of the active site. N471 and N517 each carry an N-linked (GlcNAc...) asparagine glycan. Residues 530-570 (ATSSSSSKGQKTQTSTTALSISKSTSSTSSTGMLSPTSSSS) show a composition bias toward low complexity. Residues 530 to 578 (ATSSSSSKGQKTQTSTTALSISKSTSSTSSTGMLSPTSSSSTRKENGGH) are disordered. N575 carries GPI-anchor amidated asparagine lipidation. The propeptide at 576 to 596 (GGHNLNPPFFARFITAIFHHI) is removed in mature form.

The protein belongs to the peptidase A1 family.

It is found in the cell membrane. It carries out the reaction Hydrolyzes various precursor proteins with Arg or Lys in P1, and commonly Arg or Lys also in P2. The P3 amino acid is usually non-polar, but otherwise additional basic amino acids are favorable in both non-prime and prime positions.. Functionally, cleaves proteins C-terminally to the most C-terminal basic residue. Can process the alpha-mating factor precursor. Required for cell wall integrity. The protein is Aspartic proteinase MKC7 (MKC7) of Saccharomyces cerevisiae (strain ATCC 204508 / S288c) (Baker's yeast).